A 446-amino-acid chain; its full sequence is Packaging protein 1 (446 aa).

Over residues 1–10 (METRGRRRAF) the composition is skewed to basic residues. Residues 1–74 (METRGRRRAF…PSQPPQPRSL (74 aa)) form a disordered region. 170–177 (GPTGCGKS) is an ATP binding site. A DNA-binding region spans residues 439-446 (RAYRKRNK).

Belongs to the adenoviridae packaging protein 1 family. Homodimer. Part of a genome packaging complex composed of packaging proteins 1, 2 and 3; this complex specifically binds to the packaging sequence on the left end of viral genomic DNA and performs packaging of the viral genome. Interacts with protein 33K.

The protein resides in the virion. It is found in the host nucleus. It localises to the host nucleoplasm. Its subcellular location is the host nucleolus. Component of the packaging machinery which encapsidates the viral DNA into preformed capsids and transcriptional activator of the viral major late promoter (MLP). Binds, along with packaging proteins 2 and 3, to the specific packaging sequence on the left end of viral genomic DNA and displays ATPase activity thereby providing the power stroke of the packaging machinery. The activity of packaging protein IVa2 is stimulated by protein 33K which acts as a terminase. May be the protein that pumps DNA into the capsid powered by ATP hydrolysis. Specifically binds to the 5'-CG-3' nucleotides of the repeats making up the packaging sequence. Component of the DEF-A and DEF-B transcription factors that bind downstream elements of the major late promoter (MLP), and stimulate transcription from the MLP after initiation of viral DNA replication. DEF-A is a heterodimer packaging proteins 1 and 2 and DEF-B is a homodimer of packaging protein 1. This Human adenovirus F serotype 40 (HAdV-40) protein is Packaging protein 1.